A 39-amino-acid chain; its full sequence is Cytochrome b559 subunit beta (39 aa).

Residues 14-30 traverse the membrane as a helical segment; that stretch reads WLAVHGLAVPTVFFLGS. Histidine 18 is a binding site for heme.

This sequence belongs to the PsbE/PsbF family. As to quaternary structure, heterodimer of an alpha subunit and a beta subunit. PSII is composed of 1 copy each of membrane proteins PsbA, PsbB, PsbC, PsbD, PsbE, PsbF, PsbH, PsbI, PsbJ, PsbK, PsbL, PsbM, PsbT, PsbX, PsbY, PsbZ, Psb30/Ycf12, at least 3 peripheral proteins of the oxygen-evolving complex and a large number of cofactors. It forms dimeric complexes. The cofactor is heme b.

The protein localises to the plastid. The protein resides in the chloroplast thylakoid membrane. This b-type cytochrome is tightly associated with the reaction center of photosystem II (PSII). PSII is a light-driven water:plastoquinone oxidoreductase that uses light energy to abstract electrons from H(2)O, generating O(2) and a proton gradient subsequently used for ATP formation. It consists of a core antenna complex that captures photons, and an electron transfer chain that converts photonic excitation into a charge separation. This chain is Cytochrome b559 subunit beta, found in Gnetum gnemon (Spanish joint-fir).